We begin with the raw amino-acid sequence, 396 residues long: Acetate kinase (396 aa).

N6 serves as a coordination point for Mg(2+). An ATP-binding site is contributed by K13. R89 contacts substrate. D145 (proton donor/acceptor) is an active-site residue. ATP is bound by residues 205 to 209 (HLGNG), 280 to 282 (DMR), and 329 to 333 (GVGEN). Residue E383 coordinates Mg(2+).

It belongs to the acetokinase family. In terms of assembly, homodimer. Mg(2+) is required as a cofactor. It depends on Mn(2+) as a cofactor.

Its subcellular location is the cytoplasm. It catalyses the reaction acetate + ATP = acetyl phosphate + ADP. It functions in the pathway metabolic intermediate biosynthesis; acetyl-CoA biosynthesis; acetyl-CoA from acetate: step 1/2. In terms of biological role, catalyzes the formation of acetyl phosphate from acetate and ATP. Can also catalyze the reverse reaction. This is Acetate kinase from Mesoplasma florum (strain ATCC 33453 / NBRC 100688 / NCTC 11704 / L1) (Acholeplasma florum).